We begin with the raw amino-acid sequence, 185 residues long: Probable prefoldin subunit 3 (185 aa).

Belongs to the prefoldin subunit alpha family. In terms of assembly, heterohexamer of two PFD-alpha type and four PFD-beta type subunits.

In terms of biological role, binds specifically to cytosolic chaperonin (c-CPN) and transfers target proteins to it. Binds to nascent polypeptide chain and promotes folding in an environment in which there are many competing pathways for nonnative proteins. The sequence is that of Probable prefoldin subunit 3 (pfd-3) from Caenorhabditis elegans.